The primary structure comprises 451 residues: Methionine aminopeptidase 2-2 (451 aa).

The segment at 1 to 101 (MAAKVADDVA…IDEVFPNDSY (101 aa)) is disordered. Residues 37 to 51 (EHEDSDDDNEAEEGA) show a composition bias toward acidic residues. The span at 60-73 (KKKKKRKPRKKKKA) shows a compositional bias: basic residues. A substrate-binding site is contributed by His204. Asp224, Asp235, and His304 together coordinate a divalent metal cation. His312 is a binding site for substrate. The a divalent metal cation site is built by Glu337 and Glu432.

The protein belongs to the peptidase M24A family. Methionine aminopeptidase eukaryotic type 2 subfamily. Co(2+) is required as a cofactor. It depends on Zn(2+) as a cofactor. Mn(2+) serves as cofactor. The cofactor is Fe(2+).

It is found in the cytoplasm. The enzyme catalyses Release of N-terminal amino acids, preferentially methionine, from peptides and arylamides.. In terms of biological role, cotranslationally removes the N-terminal methionine from nascent proteins. The N-terminal methionine is often cleaved when the second residue in the primary sequence is small and uncharged (Met-Ala-, Cys, Gly, Pro, Ser, Thr, or Val). The protein is Methionine aminopeptidase 2-2 of Pyrenophora tritici-repentis (strain Pt-1C-BFP) (Wheat tan spot fungus).